A 225-amino-acid chain; its full sequence is UPF0725 protein At5g63820 (225 aa).

Belongs to the UPF0725 (EMB2204) family.

The chain is UPF0725 protein At5g63820 from Arabidopsis thaliana (Mouse-ear cress).